The primary structure comprises 890 residues: Leucine--tRNA ligase (890 aa).

The short motif at 48 to 58 (PYPSGKLHMGH) is the 'HIGH' region element. Positions 645–649 (KMSKS) match the 'KMSKS' region motif. ATP is bound at residue lysine 648.

Belongs to the class-I aminoacyl-tRNA synthetase family.

The protein resides in the cytoplasm. The catalysed reaction is tRNA(Leu) + L-leucine + ATP = L-leucyl-tRNA(Leu) + AMP + diphosphate. The protein is Leucine--tRNA ligase of Polynucleobacter asymbioticus (strain DSM 18221 / CIP 109841 / QLW-P1DMWA-1) (Polynucleobacter necessarius subsp. asymbioticus).